The chain runs to 312 residues: 2-dehydropantoate 2-reductase (312 aa).

NADP(+) contacts are provided by residues 7–12 (GAGAMG), Asn105, and Ala131. Asn105 contributes to the substrate binding site. Lys187 serves as the catalytic Proton donor. Residues Asn191, Asn195, and Ser260 each contribute to the substrate site. NADP(+) is bound at residue Glu273.

This sequence belongs to the ketopantoate reductase family.

The protein resides in the cytoplasm. The catalysed reaction is (R)-pantoate + NADP(+) = 2-dehydropantoate + NADPH + H(+). It participates in cofactor biosynthesis; (R)-pantothenate biosynthesis; (R)-pantoate from 3-methyl-2-oxobutanoate: step 2/2. Catalyzes the NADPH-dependent reduction of ketopantoate into pantoic acid. The polypeptide is 2-dehydropantoate 2-reductase (Lactococcus lactis subsp. lactis (strain IL1403) (Streptococcus lactis)).